The following is a 346-amino-acid chain: NADH-ubiquinone oxidoreductase chain 2 (346 aa).

The next 11 helical transmembrane spans lie at 1-21 (MNPH…TITI), 25-45 (HWVL…PLIS), 60-80 (FLTQ…NAWA), 95-115 (CLLL…HFWF), 124-144 (LMTA…LLLM), 149-169 (LNPA…GWMG), 178-195 (ILAF…IILV), 200-219 (LALL…FMAL), 242-262 (ATLM…GFMP), 274-294 (EMTP…FFYL), and 326-346 (AILA…HAIV).

The protein belongs to the complex I subunit 2 family.

The protein resides in the mitochondrion inner membrane. It carries out the reaction a ubiquinone + NADH + 5 H(+)(in) = a ubiquinol + NAD(+) + 4 H(+)(out). Its function is as follows. Core subunit of the mitochondrial membrane respiratory chain NADH dehydrogenase (Complex I) that is believed to belong to the minimal assembly required for catalysis. Complex I functions in the transfer of electrons from NADH to the respiratory chain. The immediate electron acceptor for the enzyme is believed to be ubiquinone. In Anas acuta (Northern pintail), this protein is NADH-ubiquinone oxidoreductase chain 2 (MT-ND2).